The primary structure comprises 880 residues: Potassium/sodium hyperpolarization-activated cyclic nucleotide-gated channel 1 (880 aa).

The segment at 1–80 is disordered; it reads MEGGGKPNSS…SAGGLEDAEG (80 aa). At 1–136 the chain is on the cytoplasmic side; that stretch reads MEGGGKPNSS…WIIHSYSDFR (136 aa). A compositionally biased stretch (low complexity) spans 8–34; it reads NSSSNSRDDGNSVFPAKAPATGAGPAA. A compositionally biased stretch (gly residues) spans 62–71; sequence DGGGGGGEES. A helical transmembrane segment spans residues 137–158; the sequence is FYWDLIMLIMMVGNLVIIPVGI. Topologically, residues 159–167 are extracellular; that stretch reads TFFTEQTTT. Residues 168–188 form a helical membrane-spanning segment; the sequence is PWIIFNVASDTVFLLDLIMNF. The Cytoplasmic segment spans residues 189–209; the sequence is RTGTVNEDSSEIILDPKVIKM. Residues 210-230 form a helical membrane-spanning segment; that stretch reads NYLKSWFVVDFISSIPVDYIF. Residues 231-254 are Extracellular-facing; that stretch reads LIVEKGMDSEVYKTARALRIVRFT. A helical; Voltage-sensor transmembrane segment spans residues 255 to 275; sequence KILSLLRLLRLSRLIRYIHQW. At 276-289 the chain is on the cytoplasmic side; the sequence is EEIFHMTYDLASAV. Residues 290–312 form a helical membrane-spanning segment; that stretch reads VRIFNLIGMMLLLCHWDGCLQFL. The Extracellular segment spans residues 313-338; it reads VPLLQDFPPDCWVSLNEMVNDSWGKQ. N-linked (GlcNAc...) asparagine glycosylation is present at N332. The pore-forming intramembrane region spans 339–360; it reads YSYALFKAMSHMLCIGYGAQAP. The Selectivity filter motif lies at 352–356; sequence CIGYG. Over 361-365 the chain is Extracellular; it reads VSMSD. Residues 366 to 386 form a helical membrane-spanning segment; it reads LWITMLSMIVGATCYAMFVGH. Residues 387-880 lie on the Cytoplasmic side of the membrane; it reads ATALIQSLDS…AEKPRFASNL (494 aa). 3',5'-cyclic AMP contacts are provided by G533, E534, C536, R543, T544, R584, and R587. The segment covering 641–664 has biased composition (polar residues); sequence LNSTSSTATPTSRMRTQSPPVYTA. Disordered regions lie at residues 641 to 686, 718 to 786, and 835 to 880; these read LNST…QPSA, ASQL…LPHE, and MSSG…ASNL. Low complexity-rich tracts occupy residues 665-685 and 725-738; these read TSLSHSNLHSPSPSTQTPQPS and PQQQQQPQAPQTQP. Residues 760 to 770 show a composition bias toward polar residues; that stretch reads STQALPNTSLT. Residues 844-855 show a composition bias toward pro residues; that stretch reads RGVPPAPPPPAA. The span at 870 to 880 shows a compositional bias: basic and acidic residues; sequence EAEKPRFASNL.

This sequence belongs to the potassium channel HCN family. In terms of assembly, homotetramer. Heterotetramer with HCN2. The potassium channel is composed of a homo- or heterotetrameric complex of pore-forming subunits. Interacts with KCNE2. Interacts with the SH3 domain of CSK. As to expression, detected in myocytes in heart sinoatrial node (SAN) and in brain, in particular in the granule cell layer and in Purkinje neuron bodies in the cerebellum.

It is found in the cell membrane. The catalysed reaction is Na(+)(in) = Na(+)(out). The enzyme catalyses K(+)(in) = K(+)(out). Its activity is regulated as follows. Activated by cAMP. cAMP binding promotes tetramerization and formation of an active channel. Compared to other family members, cAMP has less stimulatory effect on HCN1 because part of the molecules already contain bound cAMP and form homotetramers when cAMP levels are low, this inherent tetramerization in HCN1 results in a weaker response to increased cAMP. Its function is as follows. Hyperpolarization-activated ion channel that are permeable to sodium and potassium ions. Exhibits weak selectivity for potassium over sodium ions. Contributes to the native pacemaker currents in heart (If) and in neurons (Ih). Participates in cerebellar mechanisms of motor learning. May mediate responses to sour stimuli. The protein is Potassium/sodium hyperpolarization-activated cyclic nucleotide-gated channel 1 (HCN1) of Oryctolagus cuniculus (Rabbit).